The primary structure comprises 267 residues: Large ribosomal subunit protein uL3 (267 aa).

Residues 124 to 147 form a disordered region; the sequence is NQHIGPKSHGGGGGSQPVRQTGSL.

It belongs to the universal ribosomal protein uL3 family. As to quaternary structure, part of the 50S ribosomal subunit. Forms a cluster with proteins L14 and L19.

Its function is as follows. One of the primary rRNA binding proteins, it binds directly near the 3'-end of the 23S rRNA, where it nucleates assembly of the 50S subunit. The sequence is that of Large ribosomal subunit protein uL3 from Mycoplasmopsis agalactiae (strain NCTC 10123 / CIP 59.7 / PG2) (Mycoplasma agalactiae).